The chain runs to 193 residues: Intracellular heme transport protein HutX (193 aa).

Residue Y116 participates in heme binding.

In terms of assembly, homodimer. Interacts with HutZ.

The protein resides in the cytoplasm. Its function is as follows. Binds heme. Heme is transferred to the heme-degrading enzyme HutZ via a specific protein-protein interaction. In Vibrio cholerae serotype O1 (strain ATCC 39315 / El Tor Inaba N16961), this protein is Intracellular heme transport protein HutX.